Here is a 450-residue protein sequence, read N- to C-terminus: Hydrolase ffsE (450 aa).

S266 serves as the catalytic Nucleophile.

Belongs to the AB hydrolase superfamily. FUS2 hydrolase family. As to quaternary structure, homodimer.

The protein operates within mycotoxin biosynthesis. Hydrolase; part of the gene cluster that mediates the biosynthesis of the cytotoxic leucine-containing cytochalasans, including aspochalasin C, aspochalasin E, TMC-169, flavichalasine F, aspergillin PZ, aspochalasin M and flavichalasine G. The first step in the pathway is catalyzed by the hybrid PKS-NRPS ffsA that utilizes 8 units of malonyl-CoA to iteratively assemble the octaketide chain before addition of L-leucine by the C-terminal NRPS modules. Because ffsA lacks a designated enoylreductase (ER) domain, the required activity is provided the enoyl reductase fssC. The methyltransferase (MT) domain of ffsA catalyzes the alpha-methylation at C10 and C14 using S-adenosyl-L-methionine as the methyl-donating cosubstrate. Reduction by the hydrolyase ffsE, followed by dehydration and intra-molecular Diels-Alder cyclization by the Diels-Alderase ffsF then yield the required isoindolone-fused macrocycle. A number of oxidative steps catalyzed by the tailoring cytochrome P450 monooxygenase ffsD, the FAD-linked oxidoreductase ffsJ and the short-chain dehydrogenase/reductase ffsI, are further required to afford the final products. This Aspergillus flavipes protein is Hydrolase ffsE.